A 293-amino-acid chain; its full sequence is Pyridoxal 5'-phosphate synthase subunit PdxS (293 aa).

Asp-23 serves as a coordination point for D-ribose 5-phosphate. Residue Lys-80 is the Schiff-base intermediate with D-ribose 5-phosphate of the active site. Gly-152 serves as a coordination point for D-ribose 5-phosphate. Arg-164 contacts D-glyceraldehyde 3-phosphate. D-ribose 5-phosphate contacts are provided by residues Gly-213 and 234–235; that span reads GS.

Belongs to the PdxS/SNZ family. In the presence of PdxT, forms a dodecamer of heterodimers.

It carries out the reaction aldehydo-D-ribose 5-phosphate + D-glyceraldehyde 3-phosphate + L-glutamine = pyridoxal 5'-phosphate + L-glutamate + phosphate + 3 H2O + H(+). The protein operates within cofactor biosynthesis; pyridoxal 5'-phosphate biosynthesis. Catalyzes the formation of pyridoxal 5'-phosphate from ribose 5-phosphate (RBP), glyceraldehyde 3-phosphate (G3P) and ammonia. The ammonia is provided by the PdxT subunit. Can also use ribulose 5-phosphate and dihydroxyacetone phosphate as substrates, resulting from enzyme-catalyzed isomerization of RBP and G3P, respectively. This Roseiflexus castenholzii (strain DSM 13941 / HLO8) protein is Pyridoxal 5'-phosphate synthase subunit PdxS.